A 96-amino-acid polypeptide reads, in one-letter code: Small ribosomal subunit protein bS18c (96 aa).

Belongs to the bacterial ribosomal protein bS18 family. Part of the 30S ribosomal subunit.

The protein localises to the plastid. Its subcellular location is the chloroplast. This is Small ribosomal subunit protein bS18c (rps18) from Pinus thunbergii (Japanese black pine).